The sequence spans 51 residues: Photosystem I reaction center subunit IX (51 aa).

A helical transmembrane segment spans residues phenylalanine 17–valine 37.

It belongs to the PsaJ family.

The protein localises to the cellular thylakoid membrane. May help in the organization of the PsaE and PsaF subunits. In Acaryochloris marina (strain MBIC 11017), this protein is Photosystem I reaction center subunit IX.